Here is a 613-residue protein sequence, read N- to C-terminus: Spastin (613 aa).

The tract at residues Met1 to Ala42 is disordered. Residues Met1–Pro61 are Cytoplasmic-facing. Residues Ser13–Ala29 show a composition bias toward low complexity. Residues Pro30–Pro39 show a composition bias toward pro residues. The segment at residues Leu62–Trp82 is an intramembrane region (helical). The Cytoplasmic segment spans residues Leu83–Val613. Residues His117–Leu192 form the MIT domain. Residues Ser224–Lys312 form a disordered region. Polar residues-rich tracts occupy residues Thr237–Leu257, Pro264–Val274, and Pro281–Ser299. ATP is bound at residue Gly379–Thr386.

It belongs to the AAA ATPase family. Spastin subfamily. In terms of assembly, homohexamer. The homohexamer is stabilized by ATP-binding. The homohexamer may adopt a ring conformation through which microtubules pass prior to being severed. Interacts with microtubules.

The protein localises to the membrane. The protein resides in the cytoplasm. It is found in the cytoskeleton. It localises to the microtubule organizing center. Its subcellular location is the centrosome. The protein localises to the perinuclear region. The protein resides in the nucleus. It carries out the reaction n ATP + n H2O + a microtubule = n ADP + n phosphate + (n+1) alpha/beta tubulin heterodimers.. Functionally, ATP-dependent microtubule severing protein that specifically recognizes and cuts microtubules that are polyglutamylated. Preferentially recognizes and acts on microtubules decorated with short polyglutamate tails: severing activity increases as the number of glutamates per tubulin rises from one to eight, but decreases beyond this glutamylation threshold. Microtubule severing promotes reorganization of cellular microtubule arrays and the release of microtubules from the centrosome following nucleation. Required for membrane traffic from the endoplasmic reticulum (ER) to the Golgi and for completion of the abscission stage of cytokinesis. Also plays a role in axon growth and the formation of axonal branches. This Gallus gallus (Chicken) protein is Spastin.